We begin with the raw amino-acid sequence, 290 residues long: Arylamine N-acetyltransferase, pineal gland isozyme NAT-10 (290 aa).

Cys68 acts as the Acyl-thioester intermediate in catalysis. Active-site residues include His107 and Asp122.

This sequence belongs to the arylamine N-acetyltransferase family.

The catalysed reaction is an arylamine + acetyl-CoA = an N-acetylarylamine + CoA. The protein is Arylamine N-acetyltransferase, pineal gland isozyme NAT-10 of Gallus gallus (Chicken).